The following is a 266-amino-acid chain: Putative [LysW]-aminoadipate/[LysW]-glutamate kinase (266 aa).

Residues 36-37, Arg63, and Asn168 each bind substrate; that span reads GG.

Belongs to the acetylglutamate kinase family. LysZ subfamily.

The protein resides in the cytoplasm. The enzyme catalyses [amino-group carrier protein]-C-terminal-N-(1,4-dicarboxybutan-1-yl)-L-glutamine + ATP = [amino-group carrier protein]-C-terminal-N-(1-carboxy-5-phosphooxy-5-oxopentan-1-yl)-L-glutamine + ADP. It catalyses the reaction [amino-group carrier protein]-C-terminal-gamma-(L-glutamyl)-L-glutamate + ATP = [amino-group carrier protein]-C-terminal-gamma-(5-phospho-L-glutamyl)-L-glutamate + ADP. Its pathway is amino-acid biosynthesis; L-lysine biosynthesis via AAA pathway; L-lysine from L-alpha-aminoadipate (Thermus route): step 2/5. It participates in amino-acid biosynthesis; L-arginine biosynthesis. Its function is as follows. Involved in both the arginine and lysine biosynthetic pathways. Phosphorylates the LysW-bound precursors glutamate (for arginine biosynthesis), respectively alpha-aminoadipate (for lysine biosynthesis). The sequence is that of Putative [LysW]-aminoadipate/[LysW]-glutamate kinase from Cenarchaeum symbiosum (strain A).